The sequence spans 238 residues: Single-stranded DNA-binding protein WHY2, mitochondrial (238 aa).

A mitochondrion-targeting transit peptide spans 1-29; that stretch reads MMKQARSLLSRSLCDQSKSLFEASTLRGF. Residues 62-67 form a required for ssDNA binding region; it reads KGKAAL.

Belongs to the Whirly family. As to quaternary structure, homotetramer.

The protein resides in the mitochondrion. In terms of biological role, single-stranded DNA-binding protein that associates with mitochondrial DNA and may play a role in the regulation of the gene expression machinery. Also seems to be required to prevent break-induced DNA rearrangements in the mitochondrial genome. Can bind to melt double-stranded DNA in vivo. The chain is Single-stranded DNA-binding protein WHY2, mitochondrial (WHY2) from Arabidopsis thaliana (Mouse-ear cress).